The sequence spans 204 residues: Large ribosomal subunit protein uL4 (204 aa).

The tract at residues 47–69 is disordered; that stretch reads KAQKNRAAVSGGGKKPWRQKGTG.

This sequence belongs to the universal ribosomal protein uL4 family. In terms of assembly, part of the 50S ribosomal subunit.

One of the primary rRNA binding proteins, this protein initially binds near the 5'-end of the 23S rRNA. It is important during the early stages of 50S assembly. It makes multiple contacts with different domains of the 23S rRNA in the assembled 50S subunit and ribosome. In terms of biological role, forms part of the polypeptide exit tunnel. This chain is Large ribosomal subunit protein uL4, found in Teredinibacter turnerae (strain ATCC 39867 / T7901).